A 322-amino-acid polypeptide reads, in one-letter code: Beta-ketoacyl-[acyl-carrier-protein] synthase III (322 aa).

Catalysis depends on residues C113 and H249. Residues 250–254 (QANIR) are ACP-binding. The active site involves N279.

Belongs to the thiolase-like superfamily. FabH family. Homodimer.

Its subcellular location is the cytoplasm. It carries out the reaction malonyl-[ACP] + acetyl-CoA + H(+) = 3-oxobutanoyl-[ACP] + CO2 + CoA. It functions in the pathway lipid metabolism; fatty acid biosynthesis. Functionally, catalyzes the condensation reaction of fatty acid synthesis by the addition to an acyl acceptor of two carbons from malonyl-ACP. Catalyzes the first condensation reaction which initiates fatty acid synthesis and may therefore play a role in governing the total rate of fatty acid production. Possesses both acetoacetyl-ACP synthase and acetyl transacylase activities. Its substrate specificity determines the biosynthesis of branched-chain and/or straight-chain of fatty acids. In Thioalkalivibrio sulfidiphilus (strain HL-EbGR7), this protein is Beta-ketoacyl-[acyl-carrier-protein] synthase III.